A 224-amino-acid polypeptide reads, in one-letter code: Adenylate kinase (224 aa).

10 to 15 (GSGKST) contributes to the ATP binding site. Positions 30–59 (SSGDLIRGEIERKSSLGLEMAAYLSRGDLI) are NMP. Residues serine 31, arginine 36, 57–59 (DLI), 83–86 (GYPR), and glutamine 90 each bind AMP. Residues 124 to 161 (GRRICPNCGAVYHITYNPPKVPGICDVCGTKLIQRTDD) form an LID region. ATP is bound at residue arginine 125. Zn(2+)-binding residues include cysteine 128 and cysteine 131. Residue 134–135 (VY) participates in ATP binding. The Zn(2+) site is built by cysteine 148 and cysteine 151. AMP is bound by residues arginine 158 and arginine 169. Residue glycine 197 participates in ATP binding.

This sequence belongs to the adenylate kinase family. In terms of assembly, monomer.

The protein resides in the cytoplasm. It carries out the reaction AMP + ATP = 2 ADP. The protein operates within purine metabolism; AMP biosynthesis via salvage pathway; AMP from ADP: step 1/1. In terms of biological role, catalyzes the reversible transfer of the terminal phosphate group between ATP and AMP. Plays an important role in cellular energy homeostasis and in adenine nucleotide metabolism. This Thermococcus gammatolerans (strain DSM 15229 / JCM 11827 / EJ3) protein is Adenylate kinase.